The following is a 306-amino-acid chain: 33 kDa chaperonin (306 aa).

Intrachain disulfides connect Cys-242–Cys-244 and Cys-275–Cys-278.

This sequence belongs to the HSP33 family. Post-translationally, under oxidizing conditions two disulfide bonds are formed involving the reactive cysteines. Under reducing conditions zinc is bound to the reactive cysteines and the protein is inactive.

It localises to the cytoplasm. Functionally, redox regulated molecular chaperone. Protects both thermally unfolding and oxidatively damaged proteins from irreversible aggregation. Plays an important role in the bacterial defense system toward oxidative stress. The protein is 33 kDa chaperonin of Gloeobacter violaceus (strain ATCC 29082 / PCC 7421).